A 417-amino-acid chain; its full sequence is Squamosa promoter-binding-like protein 14 (417 aa).

2 stretches are compositionally biased toward gly residues: residues 1-26 (MEMA…GGGG) and 51-60 (AGGGGTGSGS). Disordered regions lie at residues 1–32 (MEMA…EHRQ) and 51–102 (AGGG…PPPP). Low complexity predominate over residues 61–74 (GSASAAPPSSSSKA). Residues 75–84 (AGGGRGGGGK) show a composition bias toward gly residues. An SBP-type zinc finger spans residues 101–178 (PPRCQVEGCG…AGHNERRRRP (78 aa)). Positions 104, 109, 126, 129, 145, 148, and 152 each coordinate Zn(2+). The Bipartite nuclear localization signal signature appears at 161 to 177 (KRSCRRRLAGHNERRRR). Position 163 is a phosphoserine (Ser163). Residue Cys164 participates in Zn(2+) binding. The disordered stretch occupies residues 387–417 (LQGNGPAPAPRIDPGSGSTFDQTSNTMDWSL). Over residues 402–417 (SGSTFDQTSNTMDWSL) the composition is skewed to polar residues.

As to quaternary structure, interacts with PCF1 and PCF2. Interacts with IPI1. Interacts with D53. Interacts with SLR1. Interacts (via C-terminus) with SHI1. In terms of processing, phosphorylated at Ser-163 in response to infection by the fungal pathogen Magnaporthe oryzae. Post-translationally, ubiquitinated by IPI1, which leads to proteasomal degradation. Expressed in young panicles. Expressed in the shoot apex at both the vegetative and reproductive stages. Highly expressed in the promordia of primary and secondary branches. Highly expressed in young panicles.

The protein localises to the nucleus. In terms of biological role, transcriptional activator that binds to the SBP-box DNA core binding motif 5'-GTAC-3'. Can target the TCP motif 5'-TGGGCC/T-3' through interaction with PCF1 and PCF2. Key regulator of the plant architecture that controls shoot branching and panicle development. Promotes panicle branching. Promotes high grain yield. Binds to the promoters of TB1 and DEP1. Suppresses rice tillering mainly through positive regulation of TB1. Regulates plant height and panicle length through positive regulation of DEP1. Repressed by D53 in strigolactone (SL) signaling. Acts with D53 to mediate the SL-regulated tiller development. Functions as a direct downstream component of D53 in regulating tiller number and SL-induced gene expression. Binds directly to the D53 promoter and plays a critical role in the negative feedback regulation of SL-induced D53 expression. Involved in defense response against pathogens. Phosphorylated at Ser-163 in response to infection by the fungal pathogen Magnaporthe oryzae. Phosphorylation reduces SPL14/IPA1 binding to the GTAC site in the DEP1 promoter and enhances binding to the TGGGCC site in the WRKY45 promoter. Binding to the promoter of the pathogen defense gene WRKY45 activates its expression, leading to enhanced disease resistance. Reduces gibberellin-mediated disease susceptibility by stabilizing SLR1. Possesses transactivation activity in yeast cells. This chain is Squamosa promoter-binding-like protein 14, found in Oryza sativa subsp. japonica (Rice).